A 273-amino-acid chain; its full sequence is Large ribosomal subunit protein uL2 (273 aa).

A disordered region spans residues 221 to 273; sequence RGTAMNPVDHPHGGGEGRNFGKHPVSPWGVQTKGKKTRHNKRTDKYIVRRRGK. Basic residues predominate over residues 253-273; that stretch reads KGKKTRHNKRTDKYIVRRRGK.

This sequence belongs to the universal ribosomal protein uL2 family. In terms of assembly, part of the 50S ribosomal subunit. Forms a bridge to the 30S subunit in the 70S ribosome.

One of the primary rRNA binding proteins. Required for association of the 30S and 50S subunits to form the 70S ribosome, for tRNA binding and peptide bond formation. It has been suggested to have peptidyltransferase activity; this is somewhat controversial. Makes several contacts with the 16S rRNA in the 70S ribosome. The polypeptide is Large ribosomal subunit protein uL2 (Mannheimia succiniciproducens (strain KCTC 0769BP / MBEL55E)).